A 361-amino-acid chain; its full sequence is Peptide chain release factor 1 (361 aa).

An N5-methylglutamine modification is found at glutamine 235. The tract at residues 286–305 (IDSARSAERKQKVGSGDRSE) is disordered.

This sequence belongs to the prokaryotic/mitochondrial release factor family. Post-translationally, methylated by PrmC. Methylation increases the termination efficiency of RF1.

It is found in the cytoplasm. Peptide chain release factor 1 directs the termination of translation in response to the peptide chain termination codons UAG and UAA. The chain is Peptide chain release factor 1 from Rhodopseudomonas palustris (strain HaA2).